Here is a 343-residue protein sequence, read N- to C-terminus: F17g-G fimbrial adhesin (343 aa).

The first 22 residues, 1 to 22, serve as a signal peptide directing secretion; that stretch reads MTNFYKVCLAVFILVCCNISHA. The tract at residues 23–199 is receptor-binding lectin domain; the sequence is AVSFIGSTEN…LNPFTLNDTV (177 aa). A carbohydrate is bound by residues 65 to 66, 110 to 111, and 138 to 141; these read AN, DT, and STQG. A disulfide bridge links cysteine 75 with cysteine 132. The tract at residues 200–343 is fimbrillin-binding domain; it reads TSCRLLTPSA…GISTFTFSYQ (144 aa). The disordered stretch occupies residues 287–307; sequence LKFGPDSPVKGNENQWQLSTG. Polar residues predominate over residues 298 to 307; sequence NENQWQLSTG.

It belongs to the fimbrial protein family.

The protein resides in the fimbrium. Functionally, essential fimbrial adhesion factor that mediates binding to N-acetylglucosamine-containing receptors in the host intestinal microvilli, leading to colonization of the intestinal tissue, and diarrhea or septicemia. Also confers adhesiveness to laminin and basement membranes. May be involved in the initiation of polymerization of fimbrillin monomers during fimbrial filament biogenesis. The protein is F17g-G fimbrial adhesin (f17gG) of Escherichia coli.